A 150-amino-acid chain; its full sequence is UPF0178 protein ASA_3749 (150 aa).

The protein belongs to the UPF0178 family.

This chain is UPF0178 protein ASA_3749, found in Aeromonas salmonicida (strain A449).